The sequence spans 84 residues: UPF0297 protein Csac_1773 (84 aa).

The protein belongs to the UPF0297 family.

This is UPF0297 protein Csac_1773 from Caldicellulosiruptor saccharolyticus (strain ATCC 43494 / DSM 8903 / Tp8T 6331).